The sequence spans 549 residues: Tigger transposable element-derived protein 7 (549 aa).

Residues 1 to 52 (MNKRGKYTTLNLEEKMKVLSRIEAGRSLKSVMDEFGISKSTFYDIKKNKKLI) form the HTH psq-type domain. 2 consecutive DNA-binding regions (H-T-H motif) follow at residues 28-48 (LKSVMDEFGISKSTFYDIKKN) and 101-132 (VELQAAAERFARCFGRTDFKASTGWLFRFRNR). The HTH CENPB-type domain maps to 68-139 (KRKRTTGAKY…RNRHAIGNRK (72 aa)). The 231-residue stretch at 169–399 (LCLAQLYSGD…VKQITIANAW (231 aa)) folds into the DDE-1 domain. Residues 527 to 549 (FLKPRPHNIKDSFSGPSTSGSNH) are disordered. The segment covering 540–549 (SGPSTSGSNH) has biased composition (polar residues).

It belongs to the tigger transposable element derived protein family. In terms of tissue distribution, expressed in all tissues tested. Higher expression in testis and ovary.

The protein resides in the nucleus. The chain is Tigger transposable element-derived protein 7 (TIGD7) from Homo sapiens (Human).